A 64-amino-acid polypeptide reads, in one-letter code: Large ribosomal subunit protein bL28 (64 aa).

The protein belongs to the bacterial ribosomal protein bL28 family.

The sequence is that of Large ribosomal subunit protein bL28 from Elusimicrobium minutum (strain Pei191).